A 292-amino-acid polypeptide reads, in one-letter code: Galactinol synthase 2 (292 aa).

Lysine 65 is a catalytic residue. The Mn(2+) site is built by aspartate 81, aspartate 83, and histidine 218.

It belongs to the glycosyltransferase 8 family. Galactosyltransferase subfamily. A divalent metal cation is required as a cofactor. Present in phloem-associated intermediary cells. Weakly expressed in leaves.

Its subcellular location is the cytoplasm. The enzyme catalyses myo-inositol + UDP-alpha-D-galactose = alpha-D-galactosyl-(1-&gt;3)-1D-myo-inositol + UDP + H(+). Its function is as follows. May promote plant stress tolerance. Galactinol synthase mainly involved in the biosynthesis of transport raffinose family oligosaccharides (RFOs) that function as osmoprotectants. The polypeptide is Galactinol synthase 2 (GOLS2) (Ajuga reptans (Bugle)).